The following is a 707-amino-acid chain: Ribosomal RNA large subunit methyltransferase K/L (707 aa).

In terms of domain architecture, THUMP spans 44–155 (VIYNLCLWSR…NDILTVSFDL (112 aa)).

This sequence belongs to the methyltransferase superfamily. RlmKL family.

It localises to the cytoplasm. It catalyses the reaction guanosine(2445) in 23S rRNA + S-adenosyl-L-methionine = N(2)-methylguanosine(2445) in 23S rRNA + S-adenosyl-L-homocysteine + H(+). The enzyme catalyses guanosine(2069) in 23S rRNA + S-adenosyl-L-methionine = N(2)-methylguanosine(2069) in 23S rRNA + S-adenosyl-L-homocysteine + H(+). Functionally, specifically methylates the guanine in position 2445 (m2G2445) and the guanine in position 2069 (m7G2069) of 23S rRNA. The chain is Ribosomal RNA large subunit methyltransferase K/L from Legionella pneumophila (strain Lens).